A 199-amino-acid polypeptide reads, in one-letter code: NAD(P)H dehydrogenase (quinone) (199 aa).

In terms of domain architecture, Flavodoxin-like spans 4 to 190 (VLVLYYSSYG…AMARFQGGHV (187 aa)). Residues 10-15 (SSYGHI) and 78-80 (TRF) each bind FMN. Tyr-12 is an NAD(+) binding site. Trp-98 provides a ligand contact to substrate. FMN-binding positions include 113–119 (STATQHG) and His-134.

The protein belongs to the WrbA family. FMN is required as a cofactor.

It carries out the reaction a quinone + NADH + H(+) = a quinol + NAD(+). The catalysed reaction is a quinone + NADPH + H(+) = a quinol + NADP(+). The sequence is that of NAD(P)H dehydrogenase (quinone) from Azoarcus sp. (strain BH72).